The following is a 646-amino-acid chain: Aquaglycerol porin AQY3 (646 aa).

The span at 1 to 14 (MSYESGRSSSSSES) shows a compositional bias: low complexity. Disordered stretches follow at residues 1-68 (MSYE…SRNK) and 175-262 (KNMD…KKRT). Residues 1 to 350 (MSYESGRSSS…AKIRYHMREP (350 aa)) are Cytoplasmic-facing. The span at 19–41 (TLKEEPNGKIAWEESVKKSRENN) shows a compositional bias: basic and acidic residues. Residues 190–201 (TDISRGGSTTSV) are compositionally biased toward polar residues. Residues 351–371 (FAEFLGTLVLVIFGVGGNLQA) form a helical membrane-spanning segment. The Extracellular segment spans residues 372–383 (TVTKGSGGSYES). A helical membrane pass occupies residues 384–404 (LSFAWGFGCMLGVYVAGGISG). Topologically, residues 405–427 (GHINPAVTISMAIFRKFPWKKVP) are cytoplasmic. Positions 408–410 (NPA) match the NPA 1 motif. Residues 428 to 448 (VYIVAQIIGAYFGGAMAYGYF) form a helical membrane-spanning segment. The Extracellular portion of the chain corresponds to 449-481 (WSSITEFEGGPHIRTTATGACLFTDPKSYVTWR). Residues 482-502 (NAFFDEFIGASILVGCLMALL) traverse the membrane as a helical segment. At 503–509 (DDSNAPP) the chain is on the cytoplasmic side. A helical transmembrane segment spans residues 510–530 (GNGMTALIIGFLVAAIGMALG). The Extracellular segment spans residues 531 to 569 (YQTSFTINPARDLGPRIFASMIGYGPHAFHLTHWWWTWG). An NPA 2 motif is present at residues 538–540 (NPA). Residues 570-590 (AWGGPIAGGIAGALIYDIFIF) traverse the membrane as a helical segment. Residues 591-646 (TGCESPVNYPDNGYIENRVGKLLHAEFHQNDGTVSDESGVNSNSNTGSKKSVPTSS) are Cytoplasmic-facing. The segment at 621-646 (DGTVSDESGVNSNSNTGSKKSVPTSS) is disordered.

It belongs to the MIP/aquaporin (TC 1.A.8) family.

It localises to the cell membrane. It catalyses the reaction glycerol(in) = glycerol(out). Functionally, channel protein that mediates glycerol entry under ethanol stimulation. Does not seem to mediate glycerol uptake under standard conditions. This chain is Aquaglycerol porin AQY3, found in Saccharomyces cerevisiae (strain ATCC 204508 / S288c) (Baker's yeast).